A 313-amino-acid polypeptide reads, in one-letter code: Antiviral protein I (313 aa).

The first 22 residues, 1 to 22, serve as a signal peptide directing secretion; that stretch reads MKSMLVVTISIWLILAPTSTWA. 2 disulfides stabilise this stretch: cysteine 56–cysteine 281 and cysteine 107–cysteine 128. Tyrosine 94 is an active-site residue. Valine 95 contacts substrate. Substrate is bound at residue serine 143. Tyrosine 145 is an active-site residue. Serine 197 serves as a coordination point for substrate. Active-site residues include glutamate 198 and arginine 201. Substrate is bound at residue arginine 201. Positions 286-313 are excised as a propeptide; that stretch reads NQNAMFPQLIMSTYYNYMVNLGDLFEGF.

It belongs to the ribosome-inactivating protein family. Type 1 RIP subfamily. In terms of assembly, monomer. Expressed in spring leaves (at protein level). Expressed in roots (at protein level).

The catalysed reaction is Endohydrolysis of the N-glycosidic bond at one specific adenosine on the 28S rRNA.. Functionally, possesses antiviral potency. Inhibits viral infection of plants (tobacco mosaic virus). Inhibits protein synthesis. Releases both adenine and guanine from Escherichia coli rRNA in vitro. Activity on guanine is 20 times slower than that on adenine. This is Antiviral protein I (PAP1) from Phytolacca americana (American pokeweed).